Reading from the N-terminus, the 242-residue chain is Ubiquinone biosynthesis O-methyltransferase (242 aa).

S-adenosyl-L-methionine contacts are provided by Arg44, Gly64, Asp85, and Met129.

The protein belongs to the methyltransferase superfamily. UbiG/COQ3 family.

It carries out the reaction a 3-demethylubiquinol + S-adenosyl-L-methionine = a ubiquinol + S-adenosyl-L-homocysteine + H(+). The enzyme catalyses a 3-(all-trans-polyprenyl)benzene-1,2-diol + S-adenosyl-L-methionine = a 2-methoxy-6-(all-trans-polyprenyl)phenol + S-adenosyl-L-homocysteine + H(+). It functions in the pathway cofactor biosynthesis; ubiquinone biosynthesis. Functionally, O-methyltransferase that catalyzes the 2 O-methylation steps in the ubiquinone biosynthetic pathway. This Yersinia pseudotuberculosis serotype O:1b (strain IP 31758) protein is Ubiquinone biosynthesis O-methyltransferase.